A 520-amino-acid chain; its full sequence is Ubiquitin carboxyl-terminal hydrolase MINDY-1 (520 aa).

The tract at residues 1 to 155 (MADSCADTVD…ENEGAVAGAM (155 aa)) is disordered. Positions 26 to 37 (KNEDLEQTKPQK) are enriched in basic and acidic residues. Residues 43–54 (TEESSACVSQIK) show a composition bias toward polar residues. The span at 77-86 (ATSSASVTSK) shows a compositional bias: low complexity. 2 stretches are compositionally biased toward polar residues: residues 93–112 (VINSQSYTPSQSEATPSFSM) and 132–146 (SAKSARDGNQVSVQE). Catalysis depends on cysteine 189, which acts as the Nucleophile. The active-site Proton acceptor is the histidine 371. Disordered regions lie at residues 422–441 (SQKPSAAAAQPSTQQQQQMQ) and 467–520 (ELAR…CCIL). Positions 441-479 (QIDQDYLVAMSLQQEQGEAPGPLSDLELARQLQQEEYQQ) are ubiquitin-binding domain (UBD). Low complexity predominate over residues 469-498 (ARQLQQEEYQQPQTQQQQQQQPSAGQMRGQ). Residues 511 to 520 (KKEETDCCIL) show a composition bias toward basic and acidic residues.

It belongs to the MINDY deubiquitinase family. FAM63 subfamily.

It catalyses the reaction Thiol-dependent hydrolysis of ester, thioester, amide, peptide and isopeptide bonds formed by the C-terminal Gly of ubiquitin (a 76-residue protein attached to proteins as an intracellular targeting signal).. Functionally, hydrolase that can specifically remove 'Lys-48'-linked conjugated ubiquitin from proteins. May play a regulatory role at the level of protein turnover. The protein is Ubiquitin carboxyl-terminal hydrolase MINDY-1 (mindy1) of Danio rerio (Zebrafish).